The chain runs to 225 residues: Uridylate kinase (225 aa).

Position 9–10 (Gly-9–Ser-10) interacts with ATP. Residue Gly-46 coordinates UMP. Residues Gly-47 and Arg-51 each contribute to the ATP site. UMP is bound by residues Asp-67 and Thr-115–Thr-121. ATP contacts are provided by Thr-141, Asn-142, Tyr-147, and Asp-150.

Belongs to the UMP kinase family. In terms of assembly, homohexamer.

Its subcellular location is the cytoplasm. The catalysed reaction is UMP + ATP = UDP + ADP. Its pathway is pyrimidine metabolism; CTP biosynthesis via de novo pathway; UDP from UMP (UMPK route): step 1/1. Its activity is regulated as follows. Inhibited by UTP. In terms of biological role, catalyzes the reversible phosphorylation of UMP to UDP. This is Uridylate kinase from Methanococcus maripaludis (strain C5 / ATCC BAA-1333).